Here is a 284-residue protein sequence, read N- to C-terminus: Protoheme IX farnesyltransferase (284 aa).

A run of 9 helical transmembrane segments spans residues 2–19, 23–45, 69–89, 92–112, 121–141, 148–168, 194–214, 217–237, and 263–283; these read SLVVFTALVGLLVAPVTV, IALTGILFIALGAGASGALNMWS, GEALGIGLALSGIAVVMLGLA, LFAAGLLAFTIFFYAVVYSMW, IVIGGAAGAFPPMIGWAVATG, LFMFALIFMWTPPHFWSLALF, VLVYSLLLAPLAVAGAFTGTG, LYLATALALNGWLLVGAVRTW, and LFLHFGAILAEAALKPYGLGG.

This sequence belongs to the UbiA prenyltransferase family. Protoheme IX farnesyltransferase subfamily. As to quaternary structure, interacts with CtaA.

Its subcellular location is the cell inner membrane. The enzyme catalyses heme b + (2E,6E)-farnesyl diphosphate + H2O = Fe(II)-heme o + diphosphate. Its pathway is porphyrin-containing compound metabolism; heme O biosynthesis; heme O from protoheme: step 1/1. Converts heme B (protoheme IX) to heme O by substitution of the vinyl group on carbon 2 of heme B porphyrin ring with a hydroxyethyl farnesyl side group. In Cereibacter sphaeroides (Rhodobacter sphaeroides), this protein is Protoheme IX farnesyltransferase.